The sequence spans 450 residues: Bifunctional apoptosis regulator (450 aa).

Residues 1-24 (MEEPQKNDLSMRGQEEDHPVRSSG) are disordered. Topologically, residues 1–140 (MEEPQKNDLS…PSTGRVNQQR (140 aa)) are cytoplasmic. An RING-type zinc finger spans residues 34–74 (CHCCYDTLVNPTTLNCGHSFCRHCLALWWMSSKKTECPECR). The chain crosses the membrane as a helical span at residues 141–161 (GGGFFSGVLTALTGVAVILLV). Over 162 to 331 (YHWRSRESEH…REPTWKQWRE (170 aa)) the chain is Extracellular. Positions 182–249 (WTTEEVVLWL…LMELERVRAL (68 aa)) constitute an SAM domain. Asn-232 carries an N-linked (GlcNAc...) asparagine glycan. The chain crosses the membrane as a helical span at residues 332 to 352 (FLIKYSFLPYQLIAEFAWDWL). The Cytoplasmic segment spans residues 353–360 (EVHYWTSR). The chain crosses the membrane as a helical span at residues 361–381 (FLIVNAMLLSVLELFSFWRIW). The Extracellular segment spans residues 382–404 (SRSELKTVPQRMWSHFWKVSTQG). The helical transmembrane segment at 405–425 (LFMAMFWPLIPQFVCNCLFYW) threads the bilayer. Over 426–450 (ALYFNPIINIDLVVKEIRRLETQVF) the chain is Cytoplasmic.

As to quaternary structure, interacts with CASP8, BCL2 and BCL2L1 through SAM domain and also with HIP1, IFT57, ESRRBL1 and BCAP31. Interacts with NGFR; this interaction inhibits NF-kappa-B and JNK-related signaling pathways. Mediates RING-dependent self-ubiquitination leading to proteasomal degradation.

Its subcellular location is the endoplasmic reticulum membrane. It carries out the reaction S-ubiquitinyl-[E2 ubiquitin-conjugating enzyme]-L-cysteine + [acceptor protein]-L-lysine = [E2 ubiquitin-conjugating enzyme]-L-cysteine + N(6)-ubiquitinyl-[acceptor protein]-L-lysine.. Functionally, membrane-bound E3 ubiquitin ligase that plays a role in several processes including apoptosis regulation or reticulum endoplasmic stress. Has anti-apoptotic activity, both for apoptosis triggered via death-receptors and via mitochondrial factors. Contributes to the dynamic control of IRE1/ERN1 signaling during ER stress by inducing BAX inhibitor 1/TMBIM6 proteasomal degradation. Promotes the activation of TGF-beta signaling by mediating the 'Lys-63'-linked ubiquitination of TGFBR1 which is critical to activate the pathway. Together with NGFR, negatively regulates NF-kappa-B and JNK-related signaling pathways. Promotes the proteasome-mediated degradation of PNPLA3, a protein involveld in lipid metabolism. This chain is Bifunctional apoptosis regulator (Bfar), found in Rattus norvegicus (Rat).